A 1383-amino-acid polypeptide reads, in one-letter code: DNA-directed RNA polymerase subunit beta'' (1383 aa).

Zn(2+)-binding residues include Cys220, Cys289, Cys296, and Cys299.

Belongs to the RNA polymerase beta' chain family. RpoC2 subfamily. As to quaternary structure, in plastids the minimal PEP RNA polymerase catalytic core is composed of four subunits: alpha, beta, beta', and beta''. When a (nuclear-encoded) sigma factor is associated with the core the holoenzyme is formed, which can initiate transcription. Zn(2+) serves as cofactor.

It localises to the plastid. The protein resides in the chloroplast. It catalyses the reaction RNA(n) + a ribonucleoside 5'-triphosphate = RNA(n+1) + diphosphate. Its function is as follows. DNA-dependent RNA polymerase catalyzes the transcription of DNA into RNA using the four ribonucleoside triphosphates as substrates. This chain is DNA-directed RNA polymerase subunit beta'', found in Oenothera elata subsp. hookeri (Hooker's evening primrose).